Here is a 67-residue protein sequence, read N- to C-terminus: Kappa-conotoxin-like Em11.8 (67 aa).

A signal peptide spans 1–26 (MMFRLTSVSCFLLVIACLNLFQVVLT). 4 disulfide bridges follow: C29-C43, C36-C48, C42-C51, and C47-C55. F59 is subject to Phenylalanine amide. Positions 63-67 (ATFQE) are excised as a propeptide.

Belongs to the conotoxin I2 superfamily. In terms of tissue distribution, expressed by the venom duct.

It is found in the secreted. Inhibits the vertebrate voltage-gated potassium channels Kv1.1/KCNA1 and Kv1.3/KCNA3. This Conus emaciatus (False virgin cone) protein is Kappa-conotoxin-like Em11.8.